The following is a 210-amino-acid chain: Large ribosomal subunit protein uL4 (210 aa).

A compositionally biased stretch (polar residues) spans 41–51 (ANARQGTQSTK). Disordered regions lie at residues 41-60 (ANAR…QGSS) and 67-98 (KGTG…DFSK).

It belongs to the universal ribosomal protein uL4 family. As to quaternary structure, part of the 50S ribosomal subunit.

One of the primary rRNA binding proteins, this protein initially binds near the 5'-end of the 23S rRNA. It is important during the early stages of 50S assembly. It makes multiple contacts with different domains of the 23S rRNA in the assembled 50S subunit and ribosome. In terms of biological role, forms part of the polypeptide exit tunnel. The protein is Large ribosomal subunit protein uL4 of Dehalococcoides mccartyi (strain ATCC BAA-2100 / JCM 16839 / KCTC 5957 / BAV1).